A 703-amino-acid polypeptide reads, in one-letter code: Cycloartenol synthase (703 aa).

PFTB repeat units lie at residues 59-103 (IKKA…QLPE) and 106-148 (QREI…RLLG). Catalysis depends on Asp-435, which acts as the Proton donor. PFTB repeat units lie at residues 461-503 (IADG…QNIM), 539-579 (IARG…VASG), 587-628 (IVKA…VNTG), and 645-686 (IERG…KNIF).

It belongs to the terpene cyclase/mutase family.

The enzyme catalyses (S)-2,3-epoxysqualene = cycloartenol. Its function is as follows. Converts oxidosqualene to cycloartenol (in vitro). This Dictyostelium discoideum (Social amoeba) protein is Cycloartenol synthase (cas1).